The following is a 237-amino-acid chain: Pre-protein VI (237 aa).

Residues 1–32 constitute a propeptide that is removed on maturation; the sequence is MDDPFSTLAPRRGTQPLLSNWATIGISELHGG. Positions 33–57 are amphipathic alpha-helix essential for membrane lytic activity; it reads ALGWGSWWSNLSRLGSSFGSNLKNL. Residues 35–56 form an involved in endosomal membrane lysis region; sequence GWGSWWSNLSRLGSSFGSNLKN. The segment at 51-77 is interaction with hexon protein; that stretch reads GSNLKNLGLKAWNSSTGQALRQHLKDT. The Nuclear export signal motif lies at 70–79; that stretch reads LRQHLKDTNL. Residue T146 is modified to Phosphothreonine; by host. Positions 218-229 match the Nuclear export signal motif; it reads GTLDSIMGLGLQ. An interaction with hexon protein region spans residues 220–226; the sequence is LDSIMGL. Residues 227–237 form a binds to importin alpha/beta, involved in hexon nuclear import region; the sequence is GLQPIKRRRCF. The Nuclear localization signal signature appears at 232–235; sequence KRRR.

It belongs to the adenoviridae protein VI family. In terms of assembly, interacts with hexon protein; this interaction allows nuclear import of hexon trimers and possibly pre-capsid assembly. Interacts (via C-terminal NLS) with importin alpha/beta. As to quaternary structure, interacts (via PPxY motif) with host NEDD4 ubiquitine ligase; this interaction might play a role in virus intracellular transport during entry. Part of a complex composed of the core-capsid bridging protein, the endosome lysis protein VI and the hexon-linking protein VIII; these interactions bridge the virus core to the capsid. Interacts with peripentonal hexons; this interaction stabilizes the capsid by gluing two peripentonal hexons together and joining them with an adjacent group-of-nine hexon. Heterodimer with the viral protease; disulfide-linked. Interacts with the viral protease. Ubiquitinated by Nedd4 following partial capsid disassembly; which might play a role in intracellular virus movement during entry. Post-translationally, contains the major nuclear import and export signals. Proteolytically removed during virion maturation. The processing of the C-terminus turns the precursor into a mature viral structural protein and abrogates its ability to promote hexon import and act as a potential chaperone protein.

The protein resides in the host nucleus. It is found in the host cytoplasm. It localises to the virion. During virus assembly, promotes hexon trimers nuclear import through nuclear pore complexes via an importin alpha/beta-dependent mechanism. By analogy to herpesviruses capsid assembly, might act as a chaperone to promote the formation of the icosahedral capsid. Its function is as follows. Structural component of the virion that provides increased stability to the particle shell through its interaction with the core-capsid bridging protein and the hexon-linking protein VIII. Fibers shedding during virus entry into host cell allows the endosome lysis protein to be exposed as a membrane-lytic peptide. Exhibits pH-independent membrane fragmentation activity and probably mediates viral rapid escape from host endosome via organellar membrane lysis. It is not clear if it then remains partially associated with the capsid and involved in the intracellular microtubule-dependent transport of capsid to the nucleus, or if it is lost during endosomal penetration. In terms of biological role, cofactor that activates the viral protease. Binds to viral protease in a 1:1 ratio. The polypeptide is Pre-protein VI (Mus musculus (Mouse)).